The following is a 20-amino-acid chain: Protein PR-L3 (20 aa).

It belongs to the BetVI family.

The protein is Protein PR-L3 of Lupinus luteus (European yellow lupine).